The sequence spans 254 residues: 5-oxoprolinase subunit A (254 aa).

Belongs to the LamB/PxpA family. In terms of assembly, forms a complex composed of PxpA, PxpB and PxpC.

It catalyses the reaction 5-oxo-L-proline + ATP + 2 H2O = L-glutamate + ADP + phosphate + H(+). Functionally, catalyzes the cleavage of 5-oxoproline to form L-glutamate coupled to the hydrolysis of ATP to ADP and inorganic phosphate. This Bacillus mycoides (strain KBAB4) (Bacillus weihenstephanensis) protein is 5-oxoprolinase subunit A.